We begin with the raw amino-acid sequence, 451 residues long: Tubulin alpha-1A chain (451 aa).

An MREC motif motif is present at residues 1-4 (MREC). GTP-binding residues include Gln11, Glu71, Ser140, Gly144, Thr145, Thr179, Asn206, and Asn228. Glu71 serves as a coordination point for Mg(2+). The active site involves Glu254. A disordered region spans residues 432-451 (YEEVGVDSVEGEGEEEGEEY). 5-glutamyl polyglutamate is present on Glu445.

The protein belongs to the tubulin family. Dimer of alpha and beta chains. A typical microtubule is a hollow water-filled tube with an outer diameter of 25 nm and an inner diameter of 15 nM. Alpha-beta heterodimers associate head-to-tail to form protofilaments running lengthwise along the microtubule wall with the beta-tubulin subunit facing the microtubule plus end conferring a structural polarity. Microtubules usually have 13 protofilaments but different protofilament numbers can be found in some organisms and specialized cells. It depends on Mg(2+) as a cofactor. In terms of processing, some glutamate residues at the C-terminus are polyglycylated, resulting in polyglycine chains on the gamma-carboxyl group. Glycylation is mainly limited to tubulin incorporated into axonemes (cilia and flagella) whereas glutamylation is prevalent in neuronal cells, centrioles, axonemes, and the mitotic spindle. Both modifications can coexist on the same protein on adjacent residues, and lowering polyglycylation levels increases polyglutamylation, and reciprocally. The precise function of polyglycylation is still unclear. Some glutamate residues at the C-terminus are polyglutamylated, resulting in polyglutamate chains on the gamma-carboxyl group. Polyglutamylation plays a key role in microtubule severing by spastin (SPAST). SPAST preferentially recognizes and acts on microtubules decorated with short polyglutamate tails: severing activity by SPAST increases as the number of glutamates per tubulin rises from one to eight, but decreases beyond this glutamylation threshold. Post-translationally, undergoes a tyrosination/detyrosination cycle, the cyclic removal and re-addition of a C-terminal tyrosine residue by the enzymes tubulin tyrosine carboxypeptidase (MATCAP1, VASH1 or VASH2) and tubulin tyrosine ligase (TTL), respectively. In terms of processing, tyrosination promotes microtubule interaction with CAP-Gly microtubule plus-end tracking proteins. Tyrosinated tubulins regulate the initiation of dynein-driven motility. Detyrosination is involved in metaphase plate congression by guiding chromosomes during mitosis. Detyrosination increases microtubules-dependent mechanotransduction in dystrophic cardiac and skeletal muscle. In cardiomyocytes, detyrosinated microtubules are required to resist to contractile compression during contraction.

It localises to the cytoplasm. Its subcellular location is the cytoskeleton. The enzyme catalyses GTP + H2O = GDP + phosphate + H(+). Tubulin is the major constituent of microtubules, a cylinder consisting of laterally associated linear protofilaments composed of alpha- and beta-tubulin heterodimers. Microtubules grow by the addition of GTP-tubulin dimers to the microtubule end, where a stabilizing cap forms. Below the cap, tubulin dimers are in GDP-bound state, owing to GTPase activity of alpha-tubulin. This Gallus gallus (Chicken) protein is Tubulin alpha-1A chain (TUBA1A).